The following is a 207-amino-acid chain: Macrophage immunometabolism regulator (207 aa).

Residue Met1 is modified to N-acetylmethionine. Residues 1–41 (MEVDINGDSRSTLTTLPLPVAEGSSPGKAEAEKPRCSSTPC) form a disordered region. Ser25 and Ser167 each carry phosphoserine.

Belongs to the UNC119-binding protein family. In terms of assembly, interacts with UNC119 and UNC119B; interaction preferentially takes place when UNC119 and UNC119B are unliganded with myristoylated proteins. As to expression, highly expressed in photoreceptors.

It is found in the cytoplasm. The protein localises to the cell projection. Its subcellular location is the cilium. Functionally, regulates the macrophage function, by enhancing the resolution of inflammation and wound repair functions mediated by M2 macrophages. The regulation of macrophage function is, due at least in part, to its ability to inhibit glycolysis. May also play a role in trafficking of proteins via its interaction with UNC119 and UNC119B cargo adapters: may help the release of UNC119 and UNC119B cargo or the recycling of UNC119 and UNC119B. May play a role in ciliary membrane localization via its interaction with UNC119B and protein transport into photoreceptor cells. This Mus musculus (Mouse) protein is Macrophage immunometabolism regulator.